The sequence spans 548 residues: Chaperonin GroEL (548 aa).

Residues 29 to 32, Lys50, 86 to 90, Gly416, and Asp497 each bind ATP; these read TLGP and DGTTT.

The protein belongs to the chaperonin (HSP60) family. In terms of assembly, forms a cylinder of 14 subunits composed of two heptameric rings stacked back-to-back. Interacts with the co-chaperonin GroES.

Its subcellular location is the cytoplasm. It catalyses the reaction ATP + H2O + a folded polypeptide = ADP + phosphate + an unfolded polypeptide.. Together with its co-chaperonin GroES, plays an essential role in assisting protein folding. The GroEL-GroES system forms a nano-cage that allows encapsulation of the non-native substrate proteins and provides a physical environment optimized to promote and accelerate protein folding. The chain is Chaperonin GroEL from Neorickettsia risticii (Ehrlichia risticii).